Consider the following 130-residue polypeptide: Small ribosomal subunit protein bS16 (130 aa).

Residues 80–130 are disordered; that stretch reads AGHTPKKERANMKKAQPGKKAVERAEEKAAKASAAAEAPAEAPAAEAAAEE. Over residues 99 to 109 the composition is skewed to basic and acidic residues; the sequence is KAVERAEEKAA. Residues 110 to 130 are compositionally biased toward low complexity; that stretch reads KASAAAEAPAEAPAAEAAAEE.

The protein belongs to the bacterial ribosomal protein bS16 family.

The protein is Small ribosomal subunit protein bS16 of Jannaschia sp. (strain CCS1).